The chain runs to 347 residues: NADH-ubiquinone oxidoreductase chain 2 (347 aa).

10 helical membrane passes run 3–23 (PLTL…TVFS), 59–79 (YFLT…LNIL), 95–115 (PVLI…HFWV), 127–147 (GLIL…QISP), 149–169 (INPT…GWGG), 178–198 (ILAY…TFNP), 200–220 (TMVL…MMFM), 241–261 (VSTI…TGFI), 274–294 (GNII…YFYM), and 325–345 (LITP…ALSV).

This sequence belongs to the complex I subunit 2 family. In terms of assembly, core subunit of respiratory chain NADH dehydrogenase (Complex I) which is composed of 45 different subunits. Interacts with TMEM242.

It localises to the mitochondrion inner membrane. It carries out the reaction a ubiquinone + NADH + 5 H(+)(in) = a ubiquinol + NAD(+) + 4 H(+)(out). In terms of biological role, core subunit of the mitochondrial membrane respiratory chain NADH dehydrogenase (Complex I) which catalyzes electron transfer from NADH through the respiratory chain, using ubiquinone as an electron acceptor. Essential for the catalytic activity and assembly of complex I. The polypeptide is NADH-ubiquinone oxidoreductase chain 2 (Oryctolagus cuniculus (Rabbit)).